The chain runs to 103 residues: MYAVFQSGGKQHRVAEGQIVRLEKLNVETGATIDFNEVLMVAVGDTFKVGAPFVEGGKVVAEVVAHGRGEKVTIVKFRRRKHHRKQAGHRQWFTEVKITGISA.

This sequence belongs to the bacterial ribosomal protein bL21 family. Part of the 50S ribosomal subunit. Contacts protein L20.

In terms of biological role, this protein binds to 23S rRNA in the presence of protein L20. The polypeptide is Large ribosomal subunit protein bL21 (Aeromonas salmonicida (strain A449)).